A 428-amino-acid polypeptide reads, in one-letter code: Glutamate-1-semialdehyde 2,1-aminomutase (428 aa).

At K265 the chain carries N6-(pyridoxal phosphate)lysine.

Belongs to the class-III pyridoxal-phosphate-dependent aminotransferase family. HemL subfamily. As to quaternary structure, homodimer. It depends on pyridoxal 5'-phosphate as a cofactor.

Its subcellular location is the cytoplasm. It catalyses the reaction (S)-4-amino-5-oxopentanoate = 5-aminolevulinate. The protein operates within porphyrin-containing compound metabolism; protoporphyrin-IX biosynthesis; 5-aminolevulinate from L-glutamyl-tRNA(Glu): step 2/2. The protein is Glutamate-1-semialdehyde 2,1-aminomutase of Vesicomyosocius okutanii subsp. Calyptogena okutanii (strain HA).